The primary structure comprises 237 residues: Chloride intracellular channel protein 3 (237 aa).

The interval 1–89 is required for insertion into the membrane; the sequence is MAETTKLQLF…EEFLEETLGP (89 aa). Residues 13–91 enclose the GST N-terminal domain; the sequence is ASEDGESVGH…FLEETLGPPD (79 aa). The G-site motif lies at 23 to 26; it reads CPSC. Cys23 and Cys26 are joined by a disulfide. The helical transmembrane segment at 25-45 threads the bilayer; the sequence is SCQRLFMVLLLKGVPFTLTTV. The 168-residue stretch at 69–236 folds into the GST C-terminal domain; it reads DGDVKTDTLQ…LAAYQPAVHP (168 aa). A Phosphoserine modification is found at Ser160.

The protein belongs to the chloride channel CLIC family. Associated with the C-terminal of MAPK15.

It is found in the nucleus. The protein resides in the membrane. Its subcellular location is the cell membrane. The protein localises to the cytoplasm. It localises to the secreted. It is found in the extracellular space. The protein resides in the extracellular matrix. The enzyme catalyses chloride(in) = chloride(out). Its function is as follows. In the soluble state, catalyzes glutaredoxin-like thiol disulfide exchange reactions with reduced glutathione as electron donor. Reduced in a glutathione-dependent way and secreted into the extracellular matrix where it activates TGM2 and promotes blood vessel growth during tissue remodeling as occurs in tumorigenesis. Can reduce specific cysteines in TGM2 and regulate cofactor binding. Can insert into membranes and form outwardly rectifying chloride ion channels. May participate in cellular growth control. This is Chloride intracellular channel protein 3 from Mus musculus (Mouse).